Reading from the N-terminus, the 350-residue chain is 3-dehydroquinate synthase (350 aa).

Residues 63-68, 97-101, 121-122, Lys134, Lys143, and 161-164 each bind NAD(+); these read DGEEYK, GVIGD, TT, and FLKT. 3 residues coordinate Zn(2+): Glu176, His235, and His252.

Belongs to the sugar phosphate cyclases superfamily. Dehydroquinate synthase family. The cofactor is Co(2+). Zn(2+) serves as cofactor. NAD(+) is required as a cofactor.

Its subcellular location is the cytoplasm. The enzyme catalyses 7-phospho-2-dehydro-3-deoxy-D-arabino-heptonate = 3-dehydroquinate + phosphate. It participates in metabolic intermediate biosynthesis; chorismate biosynthesis; chorismate from D-erythrose 4-phosphate and phosphoenolpyruvate: step 2/7. Functionally, catalyzes the conversion of 3-deoxy-D-arabino-heptulosonate 7-phosphate (DAHP) to dehydroquinate (DHQ). The sequence is that of 3-dehydroquinate synthase from Sulfurovum sp. (strain NBC37-1).